We begin with the raw amino-acid sequence, 157 residues long: Transcription elongation factor GreA (157 aa).

Residues 25–43 (EGRAKVAEQLSEARDKGDL) are compositionally biased toward basic and acidic residues. A disordered region spans residues 25-47 (EGRAKVAEQLSEARDKGDLSENA). A coiled-coil region spans residues 43–79 (LSENAEYDAAKEAQEILERRIAKLEELMINARVINKD).

It belongs to the GreA/GreB family.

Necessary for efficient RNA polymerase transcription elongation past template-encoded arresting sites. The arresting sites in DNA have the property of trapping a certain fraction of elongating RNA polymerases that pass through, resulting in locked ternary complexes. Cleavage of the nascent transcript by cleavage factors such as GreA or GreB allows the resumption of elongation from the new 3'terminus. GreA releases sequences of 2 to 3 nucleotides. This Amoebophilus asiaticus (strain 5a2) protein is Transcription elongation factor GreA.